Here is a 289-residue protein sequence, read N- to C-terminus: ATP phosphoribosyltransferase (289 aa).

This sequence belongs to the ATP phosphoribosyltransferase family. Long subfamily. Requires Mg(2+) as cofactor.

The protein localises to the cytoplasm. It catalyses the reaction 1-(5-phospho-beta-D-ribosyl)-ATP + diphosphate = 5-phospho-alpha-D-ribose 1-diphosphate + ATP. It participates in amino-acid biosynthesis; L-histidine biosynthesis; L-histidine from 5-phospho-alpha-D-ribose 1-diphosphate: step 1/9. Its activity is regulated as follows. Feedback inhibited by histidine. Catalyzes the condensation of ATP and 5-phosphoribose 1-diphosphate to form N'-(5'-phosphoribosyl)-ATP (PR-ATP). Has a crucial role in the pathway because the rate of histidine biosynthesis seems to be controlled primarily by regulation of HisG enzymatic activity. This Methanosarcina mazei (strain ATCC BAA-159 / DSM 3647 / Goe1 / Go1 / JCM 11833 / OCM 88) (Methanosarcina frisia) protein is ATP phosphoribosyltransferase.